A 200-amino-acid chain; its full sequence is MLRALNRLAARPGGQPPTLLLLPVRGRKTRHDPPAKSKVGRVKMPPAVDPAELFVLTERYRQYRETVRALRREFTLEVRGKLHEARAGVLAERKAQEAIREHQELMAWNREENRRLQELRIARLQLEAQAQELRQAEVQAQRAQEEQAWVQLKEQEVLKLQEEAKNFITRENLEARIEEALDSPKSYNWAVTKEGQVVRN.

The transit peptide at 1-27 (MLRALNRLAARPGGQPPTLLLLPVRGR) directs the protein to the mitochondrion. Lys-159 bears the N6-acetyllysine mark.

The protein belongs to the mitochondrion-specific ribosomal protein mS26 family. In terms of assembly, component of the mitochondrial ribosome small subunit (28S) which comprises a 12S rRNA and about 30 distinct proteins.

The protein resides in the mitochondrion. In Rattus norvegicus (Rat), this protein is Small ribosomal subunit protein mS26 (Mrps26).